The following is a 652-amino-acid chain: Oligopeptide-binding protein AliB (652 aa).

The N-terminal stretch at 1 to 24 (MKKSKSKYLTLAGLVLGTGVLLSA) is a signal peptide. Cys-25 carries the N-palmitoyl cysteine lipid modification. Residue Cys-25 is the site of S-diacylglycerol cysteine attachment.

It belongs to the bacterial solute-binding protein 5 family.

It is found in the cell membrane. Functionally, part of the binding-protein-dependent transport system for oligopeptides; probably an oligopeptide binding protein. This is Oligopeptide-binding protein AliB (aliB) from Streptococcus pneumoniae serotype 4 (strain ATCC BAA-334 / TIGR4).